A 479-amino-acid polypeptide reads, in one-letter code: Isoprimeverose transporter (479 aa).

A run of 11 helical transmembrane segments spans residues M54–V74, P102–P122, V131–I151, F174–F194, W205–A225, W253–S273, L289–W309, L321–L341, V348–L368, F397–A417, and M431–Y451.

This sequence belongs to the sodium:galactoside symporter (TC 2.A.2) family.

The protein localises to the cell membrane. Functionally, involved in the metabolism of isoprimeverose. Transports isoprimeverose into the cell. Transport is driven by the proton motive force generated by malolactic fermentation. Cannot transport D-xylose. In Lactiplantibacillus pentosus (Lactobacillus pentosus), this protein is Isoprimeverose transporter.